The primary structure comprises 140 residues: 3-hydroxyacyl-[acyl-carrier-protein] dehydratase FabZ (140 aa).

Residue histidine 47 is part of the active site.

It belongs to the thioester dehydratase family. FabZ subfamily.

The protein localises to the cytoplasm. The catalysed reaction is a (3R)-hydroxyacyl-[ACP] = a (2E)-enoyl-[ACP] + H2O. Functionally, involved in unsaturated fatty acids biosynthesis. Catalyzes the dehydration of short chain beta-hydroxyacyl-ACPs and long chain saturated and unsaturated beta-hydroxyacyl-ACPs. In Streptococcus pyogenes serotype M49 (strain NZ131), this protein is 3-hydroxyacyl-[acyl-carrier-protein] dehydratase FabZ.